The chain runs to 134 residues: Fluoride-specific ion channel FluC (134 aa).

Transmembrane regions (helical) follow at residues 7–27, 38–58, 69–89, and 110–130; these read LAVA…TIMA, GTLL…IVLV, LFLF…AAES, and VGSL…LLGH. Na(+) is bound by residues Gly77 and Thr80.

Belongs to the fluoride channel Fluc/FEX (TC 1.A.43) family.

Its subcellular location is the cell inner membrane. It catalyses the reaction fluoride(in) = fluoride(out). With respect to regulation, na(+) is not transported, but it plays an essential structural role and its presence is essential for fluoride channel function. Functionally, fluoride-specific ion channel. Important for reducing fluoride concentration in the cell, thus reducing its toxicity. The polypeptide is Fluoride-specific ion channel FluC (Legionella pneumophila subsp. pneumophila (strain Philadelphia 1 / ATCC 33152 / DSM 7513)).